The chain runs to 673 residues: Ribonucleoprotein PTB-binding 2 (673 aa).

Residues 1–17 (MAARGGGAGGAGSGSGP) show a composition bias toward gly residues. The disordered stretch occupies residues 1–34 (MAARGGGAGGAGSGSGPSAGTAGEAAEPALRPGE). Low complexity predominate over residues 18–29 (SAGTAGEAAEPA). RRM domains follow at residues 58 to 129 (RKIL…LQPT), 131 to 209 (ALLC…WMDV), and 220 to 298 (KCLC…FCAP). The segment at 481–549 (QLPAGQAGPG…KGTEVASKNQ (69 aa)) is disordered. The span at 499-512 (SASVSISEASFSGS) shows a compositional bias: low complexity. Over residues 529 to 549 (TGNQKTPQSQPKGTEVASKNQ) the composition is skewed to polar residues.

In terms of assembly, interacts with PTBP1 and RAVER1. As to expression, expressed throughout embryogenesis. Detected at low levels in adult lung, brain and kidney, but not in the other tissues tested.

The protein resides in the nucleus. It is found in the cytoplasm. Its function is as follows. May bind single-stranded nucleic acids. The polypeptide is Ribonucleoprotein PTB-binding 2 (Raver2) (Mus musculus (Mouse)).